The sequence spans 232 residues: Chalcone--flavanone isomerase (232 aa).

Substrate contacts are provided by threonine 50 and serine 192.

It belongs to the chalcone isomerase family.

It carries out the reaction a chalcone = a flavanone.. The protein operates within secondary metabolite biosynthesis; flavonoid biosynthesis. Its function is as follows. Catalyzes the intramolecular cyclization of bicyclic chalcones into tricyclic (S)-flavanones. Responsible for the isomerization of 4,2',4',6'-tetrahydroxychalcone (also termed chalcone) into naringenin. This chain is Chalcone--flavanone isomerase (CHI), found in Saussurea medusa (Saw-wort).